The sequence spans 469 residues: Glutamate--tRNA ligase (469 aa).

Positions proline 9–glycine 19 match the 'HIGH' region motif. The Zn(2+) site is built by cysteine 98, cysteine 100, cysteine 125, and aspartate 127. The short motif at lysine 236–arginine 240 is the 'KMSKS' region element. ATP is bound at residue lysine 239.

It belongs to the class-I aminoacyl-tRNA synthetase family. Glutamate--tRNA ligase type 1 subfamily. As to quaternary structure, monomer. Zn(2+) is required as a cofactor.

Its subcellular location is the cytoplasm. The enzyme catalyses tRNA(Glu) + L-glutamate + ATP = L-glutamyl-tRNA(Glu) + AMP + diphosphate. Functionally, catalyzes the attachment of glutamate to tRNA(Glu) in a two-step reaction: glutamate is first activated by ATP to form Glu-AMP and then transferred to the acceptor end of tRNA(Glu). This Shewanella baltica (strain OS185) protein is Glutamate--tRNA ligase.